The chain runs to 211 residues: MGACGSKGSTSDKGLASDKDGKKAKDRKEAWERIRQAIPREKTAEAKQRRIELFKKFDKNETGKLCYDEVHSGCLEVLKLDEFTPRVRDITKRAFDKARALGSKLENKGSEDFVEFLEFRLMLCYIYDFFELTVMFDEIDASGNMLVDEEELKRAVPKLEAWGAKVEDPAALFKELDKNGTGSVTFDEFAAWASAVKLDADGDPDNVPESA.

Residues 1-29 form a disordered region; it reads MGACGSKGSTSDKGLASDKDGKKAKDRKE. The segment covering 15-29 has biased composition (basic and acidic residues); it reads LASDKDGKKAKDRKE. EF-hand domains follow at residues 45–80, 81–116, 127–162, and 164–199; these read EAKQ…VLKL, DEFT…FVEF, YDFF…LEAW, and AKVE…VKLD. Residues aspartate 58, asparagine 60, threonine 62, lysine 64, and glutamate 69 each contribute to the Ca(2+) site. Ca(2+) contacts are provided by aspartate 140, serine 142, asparagine 144, glutamate 151, aspartate 177, asparagine 179, threonine 181, serine 183, and glutamate 188.

The protein belongs to the calflagin family.

Its subcellular location is the cell projection. The protein localises to the cilium. The protein resides in the flagellum. May contribute to the rapid motility of the trypanosomes, playing a role either in flagellar structure or in calcium metabolism. Could alternate between a GDP-bound inactive form to a calcium/GTP-bound active form. In Trypanosoma cruzi, this protein is Flagellar calcium-binding protein (FCABP).